The chain runs to 547 residues: Vacuolar fusion protein MON1 homolog B (547 aa).

Position 1 is an N-acetylmethionine (Met-1). The span at 1–15 (MEVGGDTAAPAPGGA) shows a compositional bias: low complexity. A disordered region spans residues 1–106 (MEVGGDTAAP…GGDPSDEEWR (106 aa)). Ser-59 and Ser-61 each carry phosphoserine.

This sequence belongs to the MON1/SAND family. In terms of assembly, interacts with CCNT2; down-regulates CCNT2-mediated activation of viral promoters during herpes simplex virus 1/HHV-1 infection. Found in a complex with RMC1, CCZ1 MON1A and MON1B.

The chain is Vacuolar fusion protein MON1 homolog B (MON1B) from Homo sapiens (Human).